We begin with the raw amino-acid sequence, 297 residues long: Translocase of chloroplast 33, chloroplastic (297 aa).

Positions 34–258 constitute an AIG1-type G domain; sequence MNSMTVLVLG…HVDKKMVDGS (225 aa). A helical membrane pass occupies residues 37 to 53; the sequence is MTVLVLGKGGVGKSSTV. Residues 46 to 51 and 65 to 70 each bind GTP; these read GVGKSS and SPFQAE. Mg(2+) is bound by residues Ser-50 and Gln-68. 2 homodimerization regions span residues 65–68 and 125–130; these read SPFQ and RLDVYR. His-160 contacts GTP. Residue Ser-181 is modified to Phosphoserine. A GTP-binding site is contributed by 208-209; that stretch reads EN.

Belongs to the TRAFAC class TrmE-Era-EngA-EngB-Septin-like GTPase superfamily. AIG1/Toc34/Toc159-like paraseptin GTPase family. TOC34 subfamily. As to quaternary structure, homodimer, heterodimer with TOC34 and TOC159, and monomer. The homodimerization and the dimerization with TOC159 require the binding of GTP on Arg-130, and a hypothetical coGAP factor. The dimeric form has a higher GTPase activity than the monomeric form. Part of the TOC core complex that includes 1 protein for the specific recognition of transit peptides surrounded by a ring composed of four proteins forming translocation channels, and four to five GTP-binding proteins providing energy. This core complex can interact with components of the TIC complex to form a larger import complex. Chloroplastic protein precursor such as prSS (precursor of the RuBisCO small subunit) interacts with these complexes. The TOC complex contains a specific subset of polar lipids such as digalactosyldiacylglyceride (DGDG), phosphatidylcholine (PC) and phosphatidylglycerol (PG). Interacts at least with TOC75-3. Forms large complexes including TOC33, pPORA and OEP161 during pPORA import into plastids at the plastid envelope membrane. Interacts with SP1. Mg(2+) serves as cofactor. In terms of processing, phosphorylated by a kinase present in the outer envelope of chloroplast. When Ser-181 is phosphorylated, the binding to preprotein, GTP and GDP is inhibited, and thus, GTPase activity is repressed. As to expression, mostly expressed in seedlings and flowers, and, to a lower extent, in roots, stems, and leaves.

Its subcellular location is the plastid. The protein localises to the chloroplast outer membrane. Functionally, GTPase involved in protein precursor import into chloroplasts. Seems to recognize chloroplast-destined precursor proteins and regulate their presentation to the translocation channel through GTP hydrolysis. Binds GTP, GDP, XTP, but not ATP. Probably specialized in the import of nuclear encoded photosynthetic preproteins from the cytoplasm to the chloroplast, especially during early development stages. This chain is Translocase of chloroplast 33, chloroplastic (TOC33), found in Arabidopsis thaliana (Mouse-ear cress).